Consider the following 344-residue polypeptide: Phosphate acyltransferase (344 aa).

It belongs to the PlsX family. In terms of assembly, homodimer. Probably interacts with PlsY.

The protein resides in the cytoplasm. It carries out the reaction a fatty acyl-[ACP] + phosphate = an acyl phosphate + holo-[ACP]. Its pathway is lipid metabolism; phospholipid metabolism. Catalyzes the reversible formation of acyl-phosphate (acyl-PO(4)) from acyl-[acyl-carrier-protein] (acyl-ACP). This enzyme utilizes acyl-ACP as fatty acyl donor, but not acyl-CoA. In Erwinia tasmaniensis (strain DSM 17950 / CFBP 7177 / CIP 109463 / NCPPB 4357 / Et1/99), this protein is Phosphate acyltransferase.